Consider the following 790-residue polypeptide: Solute carrier family 26 member 9 (790 aa).

The Cytoplasmic portion of the chain corresponds to 1–70; that stretch reads MNQPRPRYVV…WLPKYKIKDY (70 aa). The chain crosses the membrane as a helical span at residues 71–96; sequence IIPDLLGGLSGGCIQVPQGMAFALLA. The Extracellular segment spans residues 97–100; the sequence is NLPA. Residues 101 to 109 traverse the membrane as a helical segment; sequence VNGLYSSFF. Residues 110 to 129 lie on the Cytoplasmic side of the membrane; that stretch reads PLLTYFFLGGIHQMVPGTFA. A helical membrane pass occupies residues 130–142; the sequence is VISILVGNICLQL. The Extracellular portion of the chain corresponds to 143-162; it reads APESKFQIFNNVTNETYVDT. The helical transmembrane segment at 163 to 191 threads the bilayer; it reads AAMEAERLHVSATLACLTAVIQMALGFMQ. Over 192-201 the chain is Cytoplasmic; sequence FGFVAIYLSE. A helical transmembrane segment spans residues 202 to 224; the sequence is SFIRGFMTAAGLQILISVLKYIF. At 225 to 237 the chain is on the extracellular side; sequence GLTIPSYTGPGSI. An intramembrane region (helical) is located at residues 238-246; the sequence is VFTFIDICK. Residues 247 to 254 lie on the Extracellular side of the membrane; the sequence is NLPHTNIA. A helical transmembrane segment spans residues 255–275; sequence SLIFALVSGVFLVLVKELNAR. The Cytoplasmic segment spans residues 276 to 286; that stretch reads YMHKIHFPIPT. The chain crosses the membrane as a helical span at residues 287–299; sequence EMIVVVVATAISG. Residues 300-334 lie on the Extracellular side of the membrane; that stretch reads SCKMPKKYHMQIVGEIRQGFPTPVAPMVSQWKGMV. Residues 335–358 form a helical membrane-spanning segment; it reads GTAFSLAIVGYVINLAMGRTLASK. Topologically, residues 359 to 365 are cytoplasmic; sequence HGYDVDS. The helical transmembrane segment at 366-379 threads the bilayer; that stretch reads NQEMIALGCSNFFG. Residues 380-390 are Extracellular-facing; that stretch reads SFFKIHVICCA. The chain crosses the membrane as a helical span at residues 391 to 400; it reads LSVTLAVDGA. The Cytoplasmic segment spans residues 401–405; it reads GGKSQ. A helical membrane pass occupies residues 406 to 419; sequence VASLCVSLVVMITM. Residues 420 to 431 are Extracellular-facing; that stretch reads LVLGSYLYPLPK. The chain crosses the membrane as a helical span at residues 432–457; sequence AVLGALIAVNLKNSLKQLTDPYYLWR. At 458 to 461 the chain is on the cytoplasmic side; the sequence is KSKL. A helical transmembrane segment spans residues 462-476; that stretch reads DCCVWVVSFLSSFFL. Topologically, residues 477-479 are extracellular; the sequence is SLP. A helical membrane pass occupies residues 480–498; sequence YGVAVGVAFSILVVIFQTQ. The Cytoplasmic portion of the chain corresponds to 499 to 790; sequence FRNGSTLAQV…MFHTETLTAL (292 aa). In terms of domain architecture, STAS spans 519–737; that stretch reads TYNRAQEIAG…PSIHDAVLFA (219 aa).

It belongs to the SLC26A/SulP transporter (TC 2.A.53) family. In terms of assembly, homodimer. Expressed in stomach and trachea. Abundantly expressed in the apical domain of the surface epithelial cells and the deep cells in the gastric gland. Also expressed in heart, brain, lung and liver.

It localises to the cell membrane. The protein resides in the endomembrane system. The enzyme catalyses chloride(in) = chloride(out). The catalysed reaction is hydrogencarbonate(in) + chloride(out) = hydrogencarbonate(out) + chloride(in). Its activity is regulated as follows. Inhibited by ammonium and thiosulfate. In terms of biological role, ion transporter that can act both as an ion channel and anion exchanger. Mainly acts as a chloride channel, which mediate uncoupled chloride anion transport in an alternate-access mechanism where a saturable binding site is alternately exposed to either one or the other side of the membrane. Also acts as a DIDS- and thiosulfate- sensitive anion exchanger the exchange of chloride for bicarbonate ions across the cell membrane. The protein is Solute carrier family 26 member 9 of Mus musculus (Mouse).